A 440-amino-acid chain; its full sequence is VLVAGSLSLVTIIGNILVMVSIKVNRHLQTVNNYFLFSLACADLIIGVFSMNLYTLYTVIGYWPLGPVVCDLWLALDYVVSNASVMNLLIISFDRYFCVTKPLTYPVKRTTKMAGMMIAAAWVLSFILWAPAILFWQFIVGVRTVEDGECYIQFFSNAAVTFGTAIAAFYLPVIIMTVLYWHISRASKSRIKKDKKEPVANQDPVSPSLVQGRIVKPNNNNMPSSDDGLEHNKIQNGKAPRDPVTENCVQGEEKESSNDSTSVSAVASNMRDDEITQDENTVSTSLGHSKDENSKQTCIRIGTKTPKSDSCTPTNTTVEVVGSSGQNGDEKQNIVARKIVKMTKQPAKKKPPPSREKKVTRTILAILLAFIITWAPYNVMVLINTFCAPCIPNTVWTIGYWLCYINSTINPACYALCNATFKKTFKHLLMCHYKNIGATR.

A helical transmembrane segment spans residues 1–19 (VLVAGSLSLVTIIGNILVM). At 20 to 33 (VSIKVNRHLQTVNN) the chain is on the cytoplasmic side. The chain crosses the membrane as a helical span at residues 34–54 (YFLFSLACADLIIGVFSMNLY). The Extracellular portion of the chain corresponds to 55 to 71 (TLYTVIGYWPLGPVVCD). An intrachain disulfide couples Cys-70 to Cys-150. A helical transmembrane segment spans residues 72–93 (LWLALDYVVSNASVMNLLIISF). The Important for signaling motif lies at 94-96 (DRY). Residues 94–113 (DRYFCVTKPLTYPVKRTTKM) are Cytoplasmic-facing. Residues 114–136 (AGMMIAAAWVLSFILWAPAILFW) form a helical membrane-spanning segment. The Extracellular segment spans residues 137-158 (QFIVGVRTVEDGECYIQFFSNA). A helical transmembrane segment spans residues 159-183 (AVTFGTAIAAFYLPVIIMTVLYWHI). Over 184 to 361 (SRASKSRIKK…PPSREKKVTR (178 aa)) the chain is Cytoplasmic. The segment at 192–329 (KKDKKEPVAN…VVGSSGQNGD (138 aa)) is disordered. Ser-206 carries the phosphoserine modification. Residues 228-244 (GLEHNKIQNGKAPRDPV) are compositionally biased toward basic and acidic residues. Polar residues-rich tracts occupy residues 258–267 (NDSTSVSAVA), 278–287 (DENTVSTSLG), and 308–327 (SDSC…SGQN). A helical membrane pass occupies residues 362–384 (TILAILLAFIITWAPYNVMVLIN). The Extracellular portion of the chain corresponds to 385–392 (TFCAPCIP). A disulfide bond links Cys-387 and Cys-390. The helical transmembrane segment at 393–416 (NTVWTIGYWLCYINSTINPACYAL) threads the bilayer. The Important for signaling motif lies at 410–414 (NPACY). The Cytoplasmic portion of the chain corresponds to 417-440 (CNATFKKTFKHLLMCHYKNIGATR). Phosphothreonine is present on residues Thr-420, Thr-424, and Thr-439.

This sequence belongs to the G-protein coupled receptor 1 family. Muscarinic acetylcholine receptor subfamily. CHRM2 sub-subfamily. Interacts with ARRB1 and ARRB2. Interacts with RACK1; the interaction regulates CHRM2 internalization. Post-translationally, phosphorylated in response to agonist treatment.

It localises to the cell membrane. It is found in the postsynaptic cell membrane. Functionally, the muscarinic acetylcholine receptor mediates various cellular responses, including inhibition of adenylate cyclase, breakdown of phosphoinositides and modulation of potassium channels through the action of G proteins. Primary transducing effect is adenylate cyclase inhibition. Signaling promotes phospholipase C activity, leading to the release of inositol trisphosphate (IP3); this then triggers calcium ion release into the cytosol. This Pan troglodytes (Chimpanzee) protein is Muscarinic acetylcholine receptor M2 (CHRM2).